The primary structure comprises 362 residues: Sulfoquinovose monooxygenase (362 aa).

This sequence belongs to the SsuD family.

The catalysed reaction is 6-sulfo-D-quinovose + FMNH2 + O2 = 6-dehydro-D-glucose + FMN + sulfite + H2O + 2 H(+). In terms of biological role, part of the alkanesulfonate monooxygenase (sulfo-ASMO) pathway, a D-sulfoquinovose degradation pathway that enables the complete utilization of all carbons within sulfoquinovose (SQ) with concomitant production of inorganic sulfite. Catalyzes the oxidative desulfurization of sulfoquinovose to sulfite and 6-dehydro-D-glucose. In Novosphingobium aromaticivorans (strain ATCC 700278 / DSM 12444 / CCUG 56034 / CIP 105152 / NBRC 16084 / F199), this protein is Sulfoquinovose monooxygenase.